Here is a 265-residue protein sequence, read N- to C-terminus: 4-hydroxy-tetrahydrodipicolinate reductase (265 aa).

Residue 9–14 coordinates NAD(+); that stretch reads GPRGRM. Lys37 contributes to the NADP(+) binding site. NAD(+) is bound by residues 99–101 and 125–128; these read GTT and APNF. His155 acts as the Proton donor/acceptor in catalysis. His156 contacts (S)-2,3,4,5-tetrahydrodipicolinate. The active-site Proton donor is the Lys159. Residue 165–166 participates in (S)-2,3,4,5-tetrahydrodipicolinate binding; sequence GT. The span at 178–190 shows a compositional bias: basic and acidic residues; sequence RESQKQGHPKEEE. The interval 178–200 is disordered; that stretch reads RESQKQGHPKEEETLPGARGADM.

This sequence belongs to the DapB family.

The protein localises to the cytoplasm. The catalysed reaction is (S)-2,3,4,5-tetrahydrodipicolinate + NAD(+) + H2O = (2S,4S)-4-hydroxy-2,3,4,5-tetrahydrodipicolinate + NADH + H(+). It carries out the reaction (S)-2,3,4,5-tetrahydrodipicolinate + NADP(+) + H2O = (2S,4S)-4-hydroxy-2,3,4,5-tetrahydrodipicolinate + NADPH + H(+). It participates in amino-acid biosynthesis; L-lysine biosynthesis via DAP pathway; (S)-tetrahydrodipicolinate from L-aspartate: step 4/4. Its function is as follows. Catalyzes the conversion of 4-hydroxy-tetrahydrodipicolinate (HTPA) to tetrahydrodipicolinate. The protein is 4-hydroxy-tetrahydrodipicolinate reductase of Oceanobacillus iheyensis (strain DSM 14371 / CIP 107618 / JCM 11309 / KCTC 3954 / HTE831).